A 691-amino-acid chain; its full sequence is Elongation factor G (691 aa).

Residues 6-281 (SKYRNIGIMA…GVVDFLPSPI (276 aa)) form the tr-type G domain. Residues 15–22 (AHIDAGKT), 79–83 (DTPGH), and 133–136 (NKMD) each bind GTP.

This sequence belongs to the TRAFAC class translation factor GTPase superfamily. Classic translation factor GTPase family. EF-G/EF-2 subfamily.

Its subcellular location is the cytoplasm. Functionally, catalyzes the GTP-dependent ribosomal translocation step during translation elongation. During this step, the ribosome changes from the pre-translocational (PRE) to the post-translocational (POST) state as the newly formed A-site-bound peptidyl-tRNA and P-site-bound deacylated tRNA move to the P and E sites, respectively. Catalyzes the coordinated movement of the two tRNA molecules, the mRNA and conformational changes in the ribosome. The protein is Elongation factor G of Wolbachia pipientis wMel.